We begin with the raw amino-acid sequence, 138 residues long: Sporulation-specific protein 13 (138 aa).

A compositionally biased stretch (polar residues) spans 1–11; that stretch reads MMSNSQISKLF. Residues 1-31 form a disordered region; the sequence is MMSNSQISKLFSSISNKENSNENALKESTNK. Over residues 12–23 the composition is skewed to low complexity; that stretch reads SSISNKENSNEN. Residues 16 to 104 adopt a coiled-coil conformation; the sequence is NKENSNENAL…KRELDYLRAK (89 aa).

Interacts with spo2.

It is found in the cytoplasm. It localises to the cytoskeleton. Its subcellular location is the microtubule organizing center. The protein resides in the spindle pole body. Functionally, involved in sporulation. Plays a significant role in modification of the spindle pole body prior to spore formation and is required for initiating forespore membrane formation. The protein is Sporulation-specific protein 13 (spo13) of Schizosaccharomyces pombe (strain 972 / ATCC 24843) (Fission yeast).